Reading from the N-terminus, the 313-residue chain is Protoheme IX farnesyltransferase (313 aa).

The next 9 membrane-spanning stretches (helical) occupy residues 29–49, 57–77, 101–123, 124–144, 157–177, 185–205, 225–245, 247–267, and 287–307; these read VISLLLWTTVTAMFMAARGWP, LWLLIVVSVAGYMSAGSAGVF, LISSRNAAIFGTTLQVLSFVMLW, VWGTPLAAWMSLAGFVFYVVI, IVIGGAAGCFPPLVGWAAVTG, YLFAIIFFWTPVHFWALALMI, MTVAQIGLYAIYTVVLSLMPV, FGAVSWIYFVSGALLGAWLLW, and AVPLYLYSMLYLALLFLAGAI.

This sequence belongs to the UbiA prenyltransferase family. Protoheme IX farnesyltransferase subfamily.

The protein resides in the cell membrane. The catalysed reaction is heme b + (2E,6E)-farnesyl diphosphate + H2O = Fe(II)-heme o + diphosphate. Its pathway is porphyrin-containing compound metabolism; heme O biosynthesis; heme O from protoheme: step 1/1. Its function is as follows. Converts heme B (protoheme IX) to heme O by substitution of the vinyl group on carbon 2 of heme B porphyrin ring with a hydroxyethyl farnesyl side group. The chain is Protoheme IX farnesyltransferase from Deinococcus radiodurans (strain ATCC 13939 / DSM 20539 / JCM 16871 / CCUG 27074 / LMG 4051 / NBRC 15346 / NCIMB 9279 / VKM B-1422 / R1).